We begin with the raw amino-acid sequence, 164 residues long: Transcription elongation factor GreA (164 aa).

Positions 50-76 (YHAAREEQGQQEARIRQLQELLNNAKV) form a coiled coil.

Belongs to the GreA/GreB family.

Functionally, necessary for efficient RNA polymerase transcription elongation past template-encoded arresting sites. The arresting sites in DNA have the property of trapping a certain fraction of elongating RNA polymerases that pass through, resulting in locked ternary complexes. Cleavage of the nascent transcript by cleavage factors such as GreA or GreB allows the resumption of elongation from the new 3'terminus. GreA releases sequences of 2 to 3 nucleotides. The polypeptide is Transcription elongation factor GreA (Mycolicibacterium smegmatis (strain ATCC 700084 / mc(2)155) (Mycobacterium smegmatis)).